The following is a 264-amino-acid chain: Thymidylate synthase (264 aa).

R21 is a dUMP binding site. H51 is a (6R)-5,10-methylene-5,6,7,8-tetrahydrofolate binding site. Residue 126–127 participates in dUMP binding; it reads RR. Residue C146 is the Nucleophile of the active site. DUMP contacts are provided by residues 166 to 169, N177, and 207 to 209; these read RSCD and HLY. (6R)-5,10-methylene-5,6,7,8-tetrahydrofolate is bound at residue D169. S263 is a (6R)-5,10-methylene-5,6,7,8-tetrahydrofolate binding site.

It belongs to the thymidylate synthase family. Bacterial-type ThyA subfamily. In terms of assembly, homodimer.

It localises to the cytoplasm. The catalysed reaction is dUMP + (6R)-5,10-methylene-5,6,7,8-tetrahydrofolate = 7,8-dihydrofolate + dTMP. It participates in pyrimidine metabolism; dTTP biosynthesis. Its function is as follows. Catalyzes the reductive methylation of 2'-deoxyuridine-5'-monophosphate (dUMP) to 2'-deoxythymidine-5'-monophosphate (dTMP) while utilizing 5,10-methylenetetrahydrofolate (mTHF) as the methyl donor and reductant in the reaction, yielding dihydrofolate (DHF) as a by-product. This enzymatic reaction provides an intracellular de novo source of dTMP, an essential precursor for DNA biosynthesis. This Buchnera aphidicola subsp. Acyrthosiphon pisum (strain APS) (Acyrthosiphon pisum symbiotic bacterium) protein is Thymidylate synthase.